The chain runs to 260 residues: Type III pantothenate kinase (260 aa).

Residue 6–13 participates in ATP binding; sequence DAGNTRIK. Substrate-binding positions include Tyr100 and 107–110; that span reads GADR. Residue Asp109 is the Proton acceptor of the active site. Position 133 (Thr133) interacts with ATP. Thr186 contributes to the substrate binding site.

Belongs to the type III pantothenate kinase family. Homodimer. The cofactor is NH4(+). It depends on K(+) as a cofactor.

It is found in the cytoplasm. It catalyses the reaction (R)-pantothenate + ATP = (R)-4'-phosphopantothenate + ADP + H(+). The protein operates within cofactor biosynthesis; coenzyme A biosynthesis; CoA from (R)-pantothenate: step 1/5. Functionally, catalyzes the phosphorylation of pantothenate (Pan), the first step in CoA biosynthesis. This chain is Type III pantothenate kinase, found in Janthinobacterium sp. (strain Marseille) (Minibacterium massiliensis).